A 74-amino-acid chain; its full sequence is DNA-directed RNA polymerase subunit omega (74 aa).

This sequence belongs to the RNA polymerase subunit omega family. As to quaternary structure, the RNAP catalytic core consists of 2 alpha, 1 beta, 1 beta' and 1 omega subunit. When a sigma factor is associated with the core the holoenzyme is formed, which can initiate transcription.

It catalyses the reaction RNA(n) + a ribonucleoside 5'-triphosphate = RNA(n+1) + diphosphate. Functionally, promotes RNA polymerase assembly. Latches the N- and C-terminal regions of the beta' subunit thereby facilitating its interaction with the beta and alpha subunits. The polypeptide is DNA-directed RNA polymerase subunit omega (Lactobacillus acidophilus (strain ATCC 700396 / NCK56 / N2 / NCFM)).